The chain runs to 433 residues: GPI mannosyltransferase 2 (433 aa).

A topological domain (cytoplasmic) is located at residue methionine 1. Residues 2–22 (IVGLTLYFVLFRSIQYLLVFL) traverse the membrane as a helical segment. Over 23–109 (TPIRQFDTST…NNDSIYHALR (87 aa)) the chain is Lumenal. N-linked (GlcNAc...) asparagine glycans are attached at residues asparagine 69 and asparagine 101. The helical transmembrane segment at 110 to 130 (VGVAIENVLFYLSGIVLYFLT) threads the bilayer. The Cytoplasmic segment spans residues 131–161 (KKIFSQNIRQSQFARTIAKKTSLLFFLTSAA). The chain crosses the membrane as a helical span at residues 162–182 (GFLTSIYSEPLSFFFAFVGIW). The Lumenal segment spans residues 183–215 (SRECSISVPVLGQFDISWRYWFPYSFISMACFT). Residues 216–236 (LASLNRSNCVLLGIYFIFDLI) traverse the membrane as a helical segment. The Cytoplasmic segment spans residues 237-243 (ELTKNRK). A helical membrane pass occupies residues 244–264 (FVKAICFPLLSGSLMFSALLY). Residues 265-318 (QQYYLPYKTFCPQRGEWCKSQLFSSIFITKTSLYSYIQSHYWGVGLLKYWTPNN) lie on the Lumenal side of the membrane. The helical transmembrane segment at 319–339 (IPNFLFAVPNIIILIYSSIYF) threads the bilayer. Over 340 to 350 (SKIYPSYNLKA) the chain is Cytoplasmic. A helical membrane pass occupies residues 351–371 (LVWITRALVVIVCFFAHVQIL). At 372-409 (NRIASFLPLHLWYLADRLVKTSDPKKMENPKGDDKIVK) the chain is on the lumenal side. The chain crosses the membrane as a helical span at residues 410–430 (FYIYWLAFWIPLQTILFAAFL). The Cytoplasmic portion of the chain corresponds to 431–433 (PPA).

This sequence belongs to the PIGV family. In terms of assembly, part of the GPI mannosyltransferase 2 complex composed of GPI18 and PGA1.

The protein localises to the endoplasmic reticulum membrane. It functions in the pathway glycolipid biosynthesis; glycosylphosphatidylinositol-anchor biosynthesis. Mannosyltransferase involved in glycosylphosphatidylinositol-anchor biosynthesis. Responsible for the transfer of the second mannose to the glycosylphosphatidylinositol during GPI precursor assembly. The protein is GPI mannosyltransferase 2 (GPI18) of Saccharomyces cerevisiae (strain ATCC 204508 / S288c) (Baker's yeast).